The following is a 165-amino-acid chain: Probable bacterial non-heme ferritin-like protein (165 aa).

Positions 1–145 constitute a Ferritin-like diiron domain; the sequence is MLSENVVKLL…SILDKLNFLG (145 aa). Residues glutamate 17, glutamate 50, histidine 53, glutamate 94, and glutamine 127 each coordinate Fe cation.

It belongs to the ferritin family. Prokaryotic subfamily.

Its subcellular location is the cytoplasm. This Haemophilus influenzae (strain ATCC 51907 / DSM 11121 / KW20 / Rd) protein is Probable bacterial non-heme ferritin-like protein (ftnB).